Consider the following 311-residue polypeptide: Porphobilinogen deaminase (311 aa).

Position 241 is an S-(dipyrrolylmethanemethyl)cysteine (cysteine 241).

This sequence belongs to the HMBS family. As to quaternary structure, monomer. It depends on dipyrromethane as a cofactor.

It carries out the reaction 4 porphobilinogen + H2O = hydroxymethylbilane + 4 NH4(+). It participates in porphyrin-containing compound metabolism; protoporphyrin-IX biosynthesis; coproporphyrinogen-III from 5-aminolevulinate: step 2/4. Its function is as follows. Tetrapolymerization of the monopyrrole PBG into the hydroxymethylbilane pre-uroporphyrinogen in several discrete steps. This chain is Porphobilinogen deaminase (hemC), found in Halalkalibacterium halodurans (strain ATCC BAA-125 / DSM 18197 / FERM 7344 / JCM 9153 / C-125) (Bacillus halodurans).